We begin with the raw amino-acid sequence, 264 residues long: Versicolorin reductase stcU (264 aa).

Positions 23, 69, 96, and 129 each coordinate NADP(+). Residues Ser145 and Ser146 each act as proton donor in the active site. Residues Tyr160, Lys164, Ile193, and Thr195 each contribute to the NADP(+) site. Residue Tyr160 is the Proton acceptor of the active site. Lys164 serves as the catalytic Lowers pKa of active site Tyr.

This sequence belongs to the short-chain dehydrogenases/reductases (SDR) family.

It catalyses the reaction (4S,8R)-2,13,16,20-tetrahydroxy-7,9-dioxapentacyclo[10.8.0.0(3,10).0(4,8).0(14,19)]icosa-1(12),2,5,10,13,16,19-heptaen-18-one + NADPH + H(+) = (4S,8R,16R)-2,13,16,20-tetrahydroxy-7,9-dioxapentacyclo[10.8.0.0(3,10).0(4,8).0(14,19)]icosa-1(12),2,5,10,13,19-hexaen-18-one + NADP(+). The protein operates within mycotoxin biosynthesis; sterigmatocystin biosynthesis. Versicolorin reductase; part of the gene cluster that mediates the biosynthesis of sterigmatocystin (ST), a polyketide-derived furanocoumarin which is part of the most toxic and carcinogenic compounds among the known mycotoxins. The first step in the biosynthesis of sterigmatocystin is the production of hexanoate by the fatty acid synthase (FAS) units stcJ and stcK. The polyketide backbone is assembled by the non-reducing polyketide synthase stcA by condensation of the starter hexanoyl-CoA and 7 malonyl-CoA extender units followed by cyclization and release of norsolorinic acid. Norsolorinic acid is the first stable intermediate in the biosynthesis of sterigmatocystin and is converted into averantin (AVN) by the ketoreductase stcE which reduces the hexanoate ketone to an alcohol. Averantin is then oxidized into 5'-hydroxyaverantin (HAVN) by the cytochrome P450 monooxygenase stcF. 5'-hydroxyaverantin is further converted to 5'-oxyaverantin (OAVN) by the 5'-hydroxyaverantin dehydrogenase stcG. The next step is the conversion of OAVN into averufin (AVF) which is catalyzed by a yet to be identified enzyme. The cytochrome P450 monooxygenase stcB and the flavin-binding monooxygenase stcW are both required for the conversion of averufin to 1-hydroxyversicolorone. The esterase stcI probably catalyzes the formation of versiconal hemiacetal acetate from 1-hydroxyversicolorone. The oxydoreductase stcN then probably catalyzes the biosynthetic step from versiconal to versicolorin B (VERB). The next step is performed by the versicolorin B desaturase stcL to produce versicolorin A (VERA). The ketoreductase stcU and the cytochrome P450 monooxygenase stcS are involved in the conversion of versicolorin A to demethylsterigmatocystin. The Baeyer-Villiger oxidas stcQ and the reductase stcR might be involved in the biosynthetic step from versicolorin A to demethylsterigmatocystin. The final step in the biosynthesis of sterigmatocystin is the methylation of demethylsterigmatocystin catalyzed by the methyltransferase stcP. This Emericella nidulans (strain FGSC A4 / ATCC 38163 / CBS 112.46 / NRRL 194 / M139) (Aspergillus nidulans) protein is Versicolorin reductase stcU.